The following is a 376-amino-acid chain: Probable dual-specificity RNA methyltransferase RlmN (376 aa).

The active-site Proton acceptor is Glu-96. Positions 102-346 (YPDRSTVCVS…CTVRVERGVE (245 aa)) constitute a Radical SAM core domain. A disulfide bridge connects residues Cys-109 and Cys-351. [4Fe-4S] cluster is bound by residues Cys-116, Cys-120, and Cys-123. S-adenosyl-L-methionine is bound by residues 171–172 (GE), Ser-203, 226–228 (SLH), and Asn-308. Cys-351 functions as the S-methylcysteine intermediate in the catalytic mechanism.

Belongs to the radical SAM superfamily. RlmN family. [4Fe-4S] cluster serves as cofactor.

The protein resides in the cytoplasm. It catalyses the reaction adenosine(2503) in 23S rRNA + 2 reduced [2Fe-2S]-[ferredoxin] + 2 S-adenosyl-L-methionine = 2-methyladenosine(2503) in 23S rRNA + 5'-deoxyadenosine + L-methionine + 2 oxidized [2Fe-2S]-[ferredoxin] + S-adenosyl-L-homocysteine. The catalysed reaction is adenosine(37) in tRNA + 2 reduced [2Fe-2S]-[ferredoxin] + 2 S-adenosyl-L-methionine = 2-methyladenosine(37) in tRNA + 5'-deoxyadenosine + L-methionine + 2 oxidized [2Fe-2S]-[ferredoxin] + S-adenosyl-L-homocysteine. Its function is as follows. Specifically methylates position 2 of adenine 2503 in 23S rRNA and position 2 of adenine 37 in tRNAs. The protein is Probable dual-specificity RNA methyltransferase RlmN of Chloroflexus aurantiacus (strain ATCC 29366 / DSM 635 / J-10-fl).